Consider the following 231-residue polypeptide: Putative N-acetylmannosamine-6-phosphate 2-epimerase (231 aa).

It belongs to the NanE family.

It catalyses the reaction an N-acyl-D-glucosamine 6-phosphate = an N-acyl-D-mannosamine 6-phosphate. Its pathway is amino-sugar metabolism; N-acetylneuraminate degradation; D-fructose 6-phosphate from N-acetylneuraminate: step 3/5. Its function is as follows. Converts N-acetylmannosamine-6-phosphate (ManNAc-6-P) to N-acetylglucosamine-6-phosphate (GlcNAc-6-P). The polypeptide is Putative N-acetylmannosamine-6-phosphate 2-epimerase (Glaesserella parasuis serovar 5 (strain SH0165) (Haemophilus parasuis)).